The primary structure comprises 90 residues: Probable Fe(2+)-trafficking protein (90 aa).

Belongs to the Fe(2+)-trafficking protein family.

Could be a mediator in iron transactions between iron acquisition and iron-requiring processes, such as synthesis and/or repair of Fe-S clusters in biosynthetic enzymes. This Pseudomonas syringae pv. tomato (strain ATCC BAA-871 / DC3000) protein is Probable Fe(2+)-trafficking protein.